A 726-amino-acid polypeptide reads, in one-letter code: Methyltransferase FGSG_00040 (726 aa).

TPR repeat units follow at residues 187–220 (SSDIRKQGKGAVQSKKWAEALRLYSSAIQAGQNV), 224–257 (QLAFLNRSFVNMNMDRPKQALLDAEKATNPAMPS), and 258–291 (EKSLFRKARALYELGDYQQSLEMLEKLTQSYPEN). Residues 336–531 (APVEIRESPG…AKTEIFFCYR (196 aa)) enclose the SET domain. Tyr530 is a binding site for S-adenosyl-L-methionine.

The protein belongs to the class V-like SAM-binding methyltransferase superfamily.

Its pathway is mycotoxin biosynthesis. In terms of biological role, methyltransferase; part of the gene cluster that mediates the biosynthesis of gramillins A and B, bicyclic lipopeptides that induce cell death in maize leaves but not in wheat leaves. The nonribosomal peptide synthetase GRA1 incorporates respectively a glutamic adic (Glu), a leucine (Leu), a serine (Ser), a hydroxyglutamine (HOGln), a 2-amino decanoic acid, and 2 cysteins (CysB and CysA). The biosynthesis of 2-amino decanoic acid incorporated in gramillins could be initiated by a fatty acid synthase composed of the alpha and beta subunits FGSG_00036 and FGSG_11656. The cytochrome P450 monooxygenase FGSG_15680 could hydroxylate the fatty acid chain. Subsequent oxidation to the ketone by the oxidoreductase FGSG_00048 and transamination by aminotransferase FGSG_00049 could form 2-amino-decanoic acid. On the other hand, FGSG_15680 could also be responsible for the HO-modified glutamine at the gamma-position. Whether hydroxylation occurs on the fully assembled product or on the Gln residue prior to assembly into the gramillins requires further proof. The thioredoxin FGSG_00043 could also be required for the disulfide-bond formation between CysA and CysB. The specific involvement of the remaining proteins from the cluster is more difficult to discern, but could have broader regulatory (FGSG_00040 and FGSG_11657) or enzymatic functions (FGSG_00044 and FGSG_00045). The final C-domain of GRA1 does not possess the expected sequence of a termination CT domain, often implicated in macrocyclization and release of a cyclopeptidein fungal NRPs; and the thioesterase FGSG_00047 may act in concert with the terminal C-domain of GRA1 to catalyze the formation of the macrocyclic anhydride and release of the products. In Gibberella zeae (strain ATCC MYA-4620 / CBS 123657 / FGSC 9075 / NRRL 31084 / PH-1) (Wheat head blight fungus), this protein is Methyltransferase FGSG_00040.